Here is a 354-residue protein sequence, read N- to C-terminus: Neuronal growth regulator 1 (354 aa).

The signal sequence occupies residues 1-37; sequence MDMMLLVQGACCSNQWLAAVLLSLCCLLPSCLPAGQS. 3 Ig-like C2-type domains span residues 38–134, 139–221, and 225–313; these read VDFP…VHLT, PKIY…KVVV, and PTIQ…LPLN. A disulfide bond links C60 and C118. N-linked (GlcNAc...) asparagine glycosylation is found at N73 and N155. 2 cysteine pairs are disulfide-bonded: C160–C203 and C245–C297. Y187 carries the post-translational modification Phosphotyrosine. N-linked (GlcNAc...) asparagine glycosylation is found at N275, N286, N294, and N307. G324 carries GPI-anchor amidated glycine lipidation. Positions 325-354 are cleaved as a propeptide — removed in mature form; sequence SADVLFSCWYLVLTLSSFTSIFYLKNAILQ.

It belongs to the immunoglobulin superfamily. IgLON family.

The protein resides in the cell membrane. In terms of biological role, may be involved in cell-adhesion. May function as a trans-neural growth-promoting factor in regenerative axon sprouting in the mammalian brain. The chain is Neuronal growth regulator 1 (NEGR1) from Homo sapiens (Human).